Consider the following 79-residue polypeptide: Sulfur carrier protein TusA (79 aa).

The Cysteine persulfide intermediate role is filled by C17.

This sequence belongs to the sulfur carrier protein TusA family.

The protein localises to the cytoplasm. Its function is as follows. Sulfur carrier protein which probably makes part of a sulfur-relay system. This Haemophilus ducreyi (strain 35000HP / ATCC 700724) protein is Sulfur carrier protein TusA.